The chain runs to 701 residues: Ribosomal RNA large subunit methyltransferase K/L (701 aa).

The THUMP domain occupies 43-155 (LLYKSLMWSR…NNILHIMLDL (113 aa)).

The protein belongs to the methyltransferase superfamily. RlmKL family.

The protein resides in the cytoplasm. It carries out the reaction guanosine(2445) in 23S rRNA + S-adenosyl-L-methionine = N(2)-methylguanosine(2445) in 23S rRNA + S-adenosyl-L-homocysteine + H(+). It catalyses the reaction guanosine(2069) in 23S rRNA + S-adenosyl-L-methionine = N(2)-methylguanosine(2069) in 23S rRNA + S-adenosyl-L-homocysteine + H(+). Specifically methylates the guanine in position 2445 (m2G2445) and the guanine in position 2069 (m7G2069) of 23S rRNA. The polypeptide is Ribosomal RNA large subunit methyltransferase K/L (Buchnera aphidicola subsp. Acyrthosiphon pisum (strain APS) (Acyrthosiphon pisum symbiotic bacterium)).